The sequence spans 282 residues: ATP synthase gamma chain (282 aa).

This sequence belongs to the ATPase gamma chain family. F-type ATPases have 2 components, CF(1) - the catalytic core - and CF(0) - the membrane proton channel. CF(1) has five subunits: alpha(3), beta(3), gamma(1), delta(1), epsilon(1). CF(0) has three main subunits: a, b and c. In this bacterium the a and b subunits are transcribed but do not seem to be translated, thus the ATP synthase consists of the alpha, beta, gamma, delta, epsilon and c subunits.

It localises to the cell membrane. Produces ATP from ADP in the presence of a proton gradient across the membrane. The gamma chain is believed to be important in regulating ATPase activity and the flow of protons through the CF(0) complex. The protein is ATP synthase gamma chain of Moorella thermoacetica (strain ATCC 39073 / JCM 9320).